The chain runs to 419 residues: uncharacterized protein (419 aa).

Transmembrane regions (helical) follow at residues 1 to 21, 24 to 44, 66 to 86, 101 to 121, 174 to 194, 216 to 236, 242 to 262, 280 to 300, 311 to 331, 349 to 369, and 396 to 416; these read MTTV…FLIL, VSPA…GGAD, ILAA…NSIT, ALAL…VAVI, SVMM…YFLA, NLPS…LLAL, IKVD…FCMG, PVAI…NSGL, SGLP…LATA, LELG…ATVF, and IPYE…IFGV.

Belongs to the CitM (TC 2.A.11) transporter family.

It is found in the cell membrane. This is an uncharacterized protein from Haemophilus influenzae (strain ATCC 51907 / DSM 11121 / KW20 / Rd).